The sequence spans 511 residues: Cobyric acid synthase (511 aa).

Positions 251-443 constitute a GATase cobBQ-type domain; it reads LLDIAIICLP…IHGIFDNDVF (193 aa). The Nucleophile role is filled by Cys-332. The active site involves His-435.

It belongs to the CobB/CobQ family. CobQ subfamily.

Its pathway is cofactor biosynthesis; adenosylcobalamin biosynthesis. Its function is as follows. Catalyzes amidations at positions B, D, E, and G on adenosylcobyrinic A,C-diamide. NH(2) groups are provided by glutamine, and one molecule of ATP is hydrogenolyzed for each amidation. The sequence is that of Cobyric acid synthase from Listeria monocytogenes serovar 1/2a (strain ATCC BAA-679 / EGD-e).